The primary structure comprises 530 residues: Autoinducer-2 kinase (530 aa).

Belongs to the FGGY kinase family.

Its subcellular location is the cytoplasm. It catalyses the reaction (S)-4,5-dihydroxypentane-2,3-dione + ATP = (2S)-2-hydroxy-3,4-dioxopentyl phosphate + ADP + H(+). Catalyzes the phosphorylation of autoinducer-2 (AI-2) to phospho-AI-2, which subsequently inactivates the transcriptional regulator LsrR and leads to the transcription of the lsr operon. Phosphorylates the ring-open form of (S)-4,5-dihydroxypentane-2,3-dione (DPD), which is the precursor to all AI-2 signaling molecules, at the C5 position. The protein is Autoinducer-2 kinase of Escherichia coli O9:H4 (strain HS).